The primary structure comprises 98 residues: NADH-ubiquinone oxidoreductase chain 4L (98 aa).

3 helical membrane passes run 1–21 (MSLVHMNIALAFTVALLGLLM), 29–49 (SLLCLEGMMLTLFIMGTIMIL), and 61–81 (IILLVFAACEAAVGLSLLVMV).

It belongs to the complex I subunit 4L family. In terms of assembly, core subunit of respiratory chain NADH dehydrogenase (Complex I) which is composed of 45 different subunits.

The protein localises to the mitochondrion inner membrane. It carries out the reaction a ubiquinone + NADH + 5 H(+)(in) = a ubiquinol + NAD(+) + 4 H(+)(out). Its function is as follows. Core subunit of the mitochondrial membrane respiratory chain NADH dehydrogenase (Complex I) which catalyzes electron transfer from NADH through the respiratory chain, using ubiquinone as an electron acceptor. Part of the enzyme membrane arm which is embedded in the lipid bilayer and involved in proton translocation. The chain is NADH-ubiquinone oxidoreductase chain 4L (MT-ND4L) from Sorex unguiculatus (Long-clawed shrew).